A 196-amino-acid polypeptide reads, in one-letter code: Nodulation protein A (196 aa).

The protein belongs to the NodA family.

The protein localises to the cytoplasm. Its function is as follows. N-acyltransferase required for nodulation. Acts in the production of a small, heat-stable compound (Nod) that stimulates mitosis in various plant protoplasts. In Mesorhizobium sp. (strain 7653R), this protein is Nodulation protein A.